The sequence spans 342 residues: RNA 3'-terminal phosphate cyclase (342 aa).

Residues Gln-100 and 283-287 (FLGDQ) each bind ATP. The active-site Tele-AMP-histidine intermediate is His-307.

It belongs to the RNA 3'-terminal cyclase family. Type 1 subfamily.

Its subcellular location is the cytoplasm. The catalysed reaction is a 3'-end 3'-phospho-ribonucleotide-RNA + ATP = a 3'-end 2',3'-cyclophospho-ribonucleotide-RNA + AMP + diphosphate. Functionally, catalyzes the conversion of 3'-phosphate to a 2',3'-cyclic phosphodiester at the end of RNA. The mechanism of action of the enzyme occurs in 3 steps: (A) adenylation of the enzyme by ATP; (B) transfer of adenylate to an RNA-N3'P to produce RNA-N3'PP5'A; (C) and attack of the adjacent 2'-hydroxyl on the 3'-phosphorus in the diester linkage to produce the cyclic end product. The biological role of this enzyme is unknown but it is likely to function in some aspects of cellular RNA processing. The polypeptide is RNA 3'-terminal phosphate cyclase (rtcA) (Pyrococcus abyssi (strain GE5 / Orsay)).